Here is a 235-residue protein sequence, read N- to C-terminus: C-&gt;U-editing enzyme APOBEC-1 (235 aa).

In terms of domain architecture, CMP/dCMP-type deaminase spans 10 to 131 (GDATLRRRIK…MDQQHRQGLK (122 aa)). Position 60 (histidine 60) interacts with Zn(2+). The Proton donor role is filled by glutamate 62. Residues cysteine 92 and cysteine 95 each coordinate Zn(2+).

The protein belongs to the cytidine and deoxycytidylate deaminase family. As to quaternary structure, homodimer. Interacts with A1CF; form an mRNA editing complex. Interacts with RBM47; form an mRNA editing complex. Found in a complex with CELF2/CUGBP2 and A1CF. Interacts with HNRPAB. Interacts with SYNCRIP. Zn(2+) is required as a cofactor.

It is found in the cytoplasm. It localises to the nucleus. The enzyme catalyses a cytidine in mRNA + H2O + H(+) = a uridine in mRNA + NH4(+). It catalyses the reaction cytidine(6666) in apoB mRNA + H2O + H(+) = uridine(6666) in apoB mRNA + NH4(+). Cytidine deaminase catalyzing the cytidine to uridine postranscriptional editing of a variety of mRNAs. Form complexes with cofactors that confer differential editing activity and selectivity. Responsible for the postranscriptional editing of a CAA codon for Gln to a UAA codon for stop in the apolipoprotein B mRNA. Also involved in CGA (Arg) to UGA (Stop) editing in the NF1 mRNA. May also play a role in the epigenetic regulation of gene expression by participating in DNA demethylation. This is C-&gt;U-editing enzyme APOBEC-1 from Monodelphis domestica (Gray short-tailed opossum).